The primary structure comprises 313 residues: R2-like ligand binding oxidase (313 aa).

3 residues coordinate Mn(2+): Glu68, Glu101, and His104. The 3-(O4'-tyrosyl)-valine (Val-Tyr) cross-link spans 71 to 162 (VTQDIQPFMS…AAQVRASVTY (92 aa)). Glu101 serves as a coordination point for Fe cation. Fe cation contacts are provided by Glu167, Glu202, and His205.

Belongs to the ribonucleoside diphosphate reductase small chain family. R2-like ligand binding oxidase subfamily. In terms of assembly, homodimer. It depends on Fe cation as a cofactor. Mn(2+) is required as a cofactor.

Functionally, probable oxidase that might be involved in lipid metabolism. This chain is R2-like ligand binding oxidase, found in Mycobacteroides abscessus (strain ATCC 19977 / DSM 44196 / CCUG 20993 / CIP 104536 / JCM 13569 / NCTC 13031 / TMC 1543 / L948) (Mycobacterium abscessus).